A 513-amino-acid chain; its full sequence is ATP synthase subunit alpha 1 (513 aa).

169 to 176 (GDRQTGKT) is an ATP binding site.

The protein belongs to the ATPase alpha/beta chains family. F-type ATPases have 2 components, CF(1) - the catalytic core - and CF(0) - the membrane proton channel. CF(1) has five subunits: alpha(3), beta(3), gamma(1), delta(1), epsilon(1). CF(0) has three main subunits: a(1), b(2) and c(9-12). The alpha and beta chains form an alternating ring which encloses part of the gamma chain. CF(1) is attached to CF(0) by a central stalk formed by the gamma and epsilon chains, while a peripheral stalk is formed by the delta and b chains.

The protein localises to the cell inner membrane. It carries out the reaction ATP + H2O + 4 H(+)(in) = ADP + phosphate + 5 H(+)(out). Functionally, produces ATP from ADP in the presence of a proton gradient across the membrane. The alpha chain is a regulatory subunit. This is ATP synthase subunit alpha 1 from Photobacterium profundum (strain SS9).